A 100-amino-acid chain; its full sequence is Aspartyl/glutamyl-tRNA(Asn/Gln) amidotransferase subunit C (100 aa).

The protein belongs to the GatC family. As to quaternary structure, heterotrimer of A, B and C subunits.

The catalysed reaction is L-glutamyl-tRNA(Gln) + L-glutamine + ATP + H2O = L-glutaminyl-tRNA(Gln) + L-glutamate + ADP + phosphate + H(+). It carries out the reaction L-aspartyl-tRNA(Asn) + L-glutamine + ATP + H2O = L-asparaginyl-tRNA(Asn) + L-glutamate + ADP + phosphate + 2 H(+). In terms of biological role, allows the formation of correctly charged Asn-tRNA(Asn) or Gln-tRNA(Gln) through the transamidation of misacylated Asp-tRNA(Asn) or Glu-tRNA(Gln) in organisms which lack either or both of asparaginyl-tRNA or glutaminyl-tRNA synthetases. The reaction takes place in the presence of glutamine and ATP through an activated phospho-Asp-tRNA(Asn) or phospho-Glu-tRNA(Gln). This Rickettsia rickettsii (strain Sheila Smith) protein is Aspartyl/glutamyl-tRNA(Asn/Gln) amidotransferase subunit C.